A 226-amino-acid chain; its full sequence is Lysosomal-associated transmembrane protein 4B (226 aa).

Helical transmembrane passes span 26 to 46, 72 to 92, 100 to 120, and 153 to 173; these read ILLGVWYLIINAVVLLILLSA, MCIAIAISLLMILICAMATYG, WIIPFFCYQIFDFALNTLVAI, and CLVLIILLFISIILTFKGYLI. The interval 205-221 is required for NEDD4 interaction; that stretch reads PPYDDATVNGAAKEPPP.

This sequence belongs to the LAPTM4/LAPTM5 transporter family. As to quaternary structure, homooligomer; upon reaching the lysosomes. Interacts with MCOLN1. Interacts with NEDD4; may play a role in the lysosomal sorting of LAPTM4B; enhances HGS association with NEDD4; mediates inhibition of EGFR degradation. Interacts with PIP5K1C; promotes SNX5 association with LAPTM4B; kinase activity of PIP5K1C is required; interaction is regulated by phosphatidylinositol 4,5-bisphosphate generated by PIP5K1C. Interacts with HGS; promotes HGS ubiquitination. Interacts with SNX5. Interacts with SLC3A2 and SLC7A5; recruits SLC3A2 and SLC7A5 to lysosomes to promote leucine uptake into these organelles and is required for mTORC1 activation. Interacts with LRRC32; decreases TGFB1 production in regulatory T cells. Interacts with BECN1; competes with EGFR for LAPTM4B binding; regulates EGFR activity. Interacts with EGFR; positively correlates with EGFR activation. Post-translationally, undergoes proteolytic cleavage following delivery to the lysosomes. In terms of processing, ubiquitinated by NEDD4.

The protein resides in the endomembrane system. Its subcellular location is the late endosome membrane. It is found in the cell membrane. The protein localises to the cell projection. It localises to the lysosome membrane. The protein resides in the endosome membrane. Its subcellular location is the endosome. It is found in the multivesicular body membrane. The protein localises to the multivesicular body lumen. Its function is as follows. Required for optimal lysosomal function. Blocks EGF-stimulated EGFR intraluminal sorting and degradation. Conversely by binding with the phosphatidylinositol 4,5-bisphosphate, regulates its PIP5K1C interaction, inhibits HGS ubiquitination and relieves LAPTM4B inhibition of EGFR degradation. Recruits SLC3A2 and SLC7A5 (the Leu transporter) to the lysosome, promoting entry of leucine and other essential amino acid (EAA) into the lysosome, stimulating activation of proton-transporting vacuolar (V)-ATPase protein pump (V-ATPase) and hence mTORC1 activation. Plays a role as negative regulator of TGFB1 production in regulatory T cells. Binds ceramide and facilitates its exit from late endosome in order to control cell death pathways. In Macaca fascicularis (Crab-eating macaque), this protein is Lysosomal-associated transmembrane protein 4B.